A 193-amino-acid chain; its full sequence is Ion-translocating oxidoreductase complex subunit A (193 aa).

6 helical membrane passes run 5 to 25 (LLLF…FLGL), 47 to 67 (FVMT…LVPL), 72 to 92 (LRTM…EMVV), 102 to 122 (LLGI…VALL), 134 to 154 (ALYG…FAAI), and 171 to 191 (AIAL…SGLV).

It belongs to the NqrDE/RnfAE family. In terms of assembly, the complex is composed of six subunits: RnfA, RnfB, RnfC, RnfD, RnfE and RnfG.

It is found in the cell inner membrane. In terms of biological role, part of a membrane-bound complex that couples electron transfer with translocation of ions across the membrane. The protein is Ion-translocating oxidoreductase complex subunit A of Cronobacter sakazakii (strain ATCC BAA-894) (Enterobacter sakazakii).